The chain runs to 164 residues: Nucleotide-binding protein EF_1165 (164 aa).

It belongs to the YajQ family.

Its function is as follows. Nucleotide-binding protein. This is Nucleotide-binding protein EF_1165 from Enterococcus faecalis (strain ATCC 700802 / V583).